A 312-amino-acid polypeptide reads, in one-letter code: tRNA pseudouridine synthase B (312 aa).

Asp-38 serves as the catalytic Nucleophile.

The protein belongs to the pseudouridine synthase TruB family. Type 1 subfamily.

The enzyme catalyses uridine(55) in tRNA = pseudouridine(55) in tRNA. Responsible for synthesis of pseudouridine from uracil-55 in the psi GC loop of transfer RNAs. In Syntrophus aciditrophicus (strain SB), this protein is tRNA pseudouridine synthase B.